The primary structure comprises 154 residues: Golgi-associated plant pathogenesis-related protein 1 (154 aa).

The tract at residues 1-21 (MGKSASKQFHNEVLKAHNEYR) is disordered. Gly2 is lipidated: N-myristoyl glycine. Basic and acidic residues predominate over residues 9-21 (FHNEVLKAHNEYR). Residues 14 to 132 (LKAHNEYRQK…SDGSSFVVAR (119 aa)) enclose the SCP domain. Residues 30 to 53 (KLCKNLNREAQQYSEALASTRILK) adopt a coiled-coil conformation. Residues 91 to 98 (NFQQPGFT) form an interaction with CAV1 region.

Belongs to the CRISP family. Homodimer. Interacts with CAV1. In terms of tissue distribution, highest expression in lung and peripheral leukocytes, and minor expression in liver and kidney.

It localises to the golgi apparatus membrane. This is Golgi-associated plant pathogenesis-related protein 1 (GLIPR2) from Homo sapiens (Human).